A 610-amino-acid polypeptide reads, in one-letter code: DNA mismatch repair protein MutL (610 aa).

It belongs to the DNA mismatch repair MutL/HexB family.

This protein is involved in the repair of mismatches in DNA. It is required for dam-dependent methyl-directed DNA mismatch repair. May act as a 'molecular matchmaker', a protein that promotes the formation of a stable complex between two or more DNA-binding proteins in an ATP-dependent manner without itself being part of a final effector complex. This is DNA mismatch repair protein MutL from Rickettsia africae (strain ESF-5).